The chain runs to 119 residues: Large ribosomal subunit protein uL22 (119 aa).

The protein belongs to the universal ribosomal protein uL22 family. Part of the 50S ribosomal subunit.

Its function is as follows. This protein binds specifically to 23S rRNA; its binding is stimulated by other ribosomal proteins, e.g. L4, L17, and L20. It is important during the early stages of 50S assembly. It makes multiple contacts with different domains of the 23S rRNA in the assembled 50S subunit and ribosome. The globular domain of the protein is located near the polypeptide exit tunnel on the outside of the subunit, while an extended beta-hairpin is found that lines the wall of the exit tunnel in the center of the 70S ribosome. The chain is Large ribosomal subunit protein uL22 from Rickettsia typhi (strain ATCC VR-144 / Wilmington).